Consider the following 142-residue polypeptide: Transcription antitermination protein NusB (142 aa).

This sequence belongs to the NusB family.

Its function is as follows. Involved in transcription antitermination. Required for transcription of ribosomal RNA (rRNA) genes. Binds specifically to the boxA antiterminator sequence of the ribosomal RNA (rrn) operons. This is Transcription antitermination protein NusB from Persephonella marina (strain DSM 14350 / EX-H1).